Here is a 185-residue protein sequence, read N- to C-terminus: ATP synthase subunit b (185 aa).

Residues 27–47 (GALIWKGLNILAFLGIVYYFG) form a helical membrane-spanning segment.

This sequence belongs to the ATPase B chain family. F-type ATPases have 2 components, F(1) - the catalytic core - and F(0) - the membrane proton channel. F(1) has five subunits: alpha(3), beta(3), gamma(1), delta(1), epsilon(1). F(0) has three main subunits: a(1), b(2) and c(10-14). The alpha and beta chains form an alternating ring which encloses part of the gamma chain. F(1) is attached to F(0) by a central stalk formed by the gamma and epsilon chains, while a peripheral stalk is formed by the delta and b chains.

Its subcellular location is the cell inner membrane. In terms of biological role, f(1)F(0) ATP synthase produces ATP from ADP in the presence of a proton or sodium gradient. F-type ATPases consist of two structural domains, F(1) containing the extramembraneous catalytic core and F(0) containing the membrane proton channel, linked together by a central stalk and a peripheral stalk. During catalysis, ATP synthesis in the catalytic domain of F(1) is coupled via a rotary mechanism of the central stalk subunits to proton translocation. Functionally, component of the F(0) channel, it forms part of the peripheral stalk, linking F(1) to F(0). In Aquifex aeolicus (strain VF5), this protein is ATP synthase subunit b.